A 337-amino-acid chain; its full sequence is Aspartate carbamoyltransferase catalytic subunit (337 aa).

The carbamoyl phosphate site is built by R54 and T55. K82 lines the L-aspartate pocket. R104, H134, and Q137 together coordinate carbamoyl phosphate. The L-aspartate site is built by R177 and R232. Carbamoyl phosphate-binding residues include G277 and P278.

Belongs to the aspartate/ornithine carbamoyltransferase superfamily. ATCase family. As to quaternary structure, heterododecamer (2C3:3R2) of six catalytic PyrB chains organized as two trimers (C3), and six regulatory PyrI chains organized as three dimers (R2).

It carries out the reaction carbamoyl phosphate + L-aspartate = N-carbamoyl-L-aspartate + phosphate + H(+). It participates in pyrimidine metabolism; UMP biosynthesis via de novo pathway; (S)-dihydroorotate from bicarbonate: step 2/3. Its function is as follows. Catalyzes the condensation of carbamoyl phosphate and aspartate to form carbamoyl aspartate and inorganic phosphate, the committed step in the de novo pyrimidine nucleotide biosynthesis pathway. The chain is Aspartate carbamoyltransferase catalytic subunit from Arthrobacter sp. (strain FB24).